The chain runs to 388 residues: tRNA(Ile)-lysidine synthase (388 aa).

51-56 (SGGRDS) contacts ATP.

Belongs to the tRNA(Ile)-lysidine synthase family.

Its subcellular location is the cytoplasm. The enzyme catalyses cytidine(34) in tRNA(Ile2) + L-lysine + ATP = lysidine(34) in tRNA(Ile2) + AMP + diphosphate + H(+). Ligates lysine onto the cytidine present at position 34 of the AUA codon-specific tRNA(Ile) that contains the anticodon CAU, in an ATP-dependent manner. Cytidine is converted to lysidine, thus changing the amino acid specificity of the tRNA from methionine to isoleucine. This chain is tRNA(Ile)-lysidine synthase, found in Bifidobacterium longum subsp. infantis (strain ATCC 15697 / DSM 20088 / JCM 1222 / NCTC 11817 / S12).